A 312-amino-acid polypeptide reads, in one-letter code: Urease accessory protein UreD (312 aa).

The segment covering 1 to 15 (MLAEQFTDKNKHAEQ) has biased composition (basic and acidic residues). The segment at 1-24 (MLAEQFTDKNKHAEQELSPGSSAV) is disordered.

The protein belongs to the UreD family. In terms of assembly, ureD, UreF and UreG form a complex that acts as a GTP-hydrolysis-dependent molecular chaperone, activating the urease apoprotein by helping to assemble the nickel containing metallocenter of UreC. The UreE protein probably delivers the nickel.

The protein localises to the cytoplasm. Functionally, required for maturation of urease via the functional incorporation of the urease nickel metallocenter. In Hahella chejuensis (strain KCTC 2396), this protein is Urease accessory protein UreD.